The chain runs to 307 residues: 4-hydroxythreonine-4-phosphate dehydrogenase (307 aa).

Substrate is bound by residues H121 and T122. Positions 150, 189, and 246 each coordinate a divalent metal cation. Positions 254, 263, and 272 each coordinate substrate.

The protein belongs to the PdxA family. In terms of assembly, homodimer. Zn(2+) serves as cofactor. Mg(2+) is required as a cofactor. Requires Co(2+) as cofactor.

The protein localises to the cytoplasm. It carries out the reaction 4-(phosphooxy)-L-threonine + NAD(+) = 3-amino-2-oxopropyl phosphate + CO2 + NADH. The protein operates within cofactor biosynthesis; pyridoxine 5'-phosphate biosynthesis; pyridoxine 5'-phosphate from D-erythrose 4-phosphate: step 4/5. Its function is as follows. Catalyzes the NAD(P)-dependent oxidation of 4-(phosphooxy)-L-threonine (HTP) into 2-amino-3-oxo-4-(phosphooxy)butyric acid which spontaneously decarboxylates to form 3-amino-2-oxopropyl phosphate (AHAP). The polypeptide is 4-hydroxythreonine-4-phosphate dehydrogenase (Campylobacter fetus subsp. fetus (strain 82-40)).